Consider the following 355-residue polypeptide: Probable nitronate monooxygenase (355 aa).

FMN contacts are provided by residues asparagine 71, glutamine 175, glycine 180, glycine 218, and 237 to 240 (QMGT).

It belongs to the nitronate monooxygenase family. NMO class I subfamily. Requires FMN as cofactor.

The catalysed reaction is 3 propionate 3-nitronate + 3 O2 + H2O = 3 3-oxopropanoate + 2 nitrate + nitrite + H2O2 + 3 H(+). Functionally, nitronate monooxygenase that uses molecular oxygen to catalyze the oxidative denitrification of alkyl nitronates. Acts on propionate 3-nitronate (P3N), the presumed physiological substrate. Probably functions in the detoxification of P3N, a metabolic poison produced by plants and fungi as a defense mechanism. This is Probable nitronate monooxygenase from Staphylococcus aureus (strain USA300).